The following is a 305-amino-acid chain: Cbb3-type cytochrome c oxidase subunit CcoP2 (305 aa).

A run of 2 helical transmembrane segments spans residues 4–24 (FWSW…VWLL) and 57–77 (WWFM…VLYP). Cytochrome c domains are found at residues 130–209 (QALK…RSLS) and 219–300 (VDIE…YSLS). Cysteine 143, cysteine 146, histidine 147, methionine 186, cysteine 232, cysteine 235, histidine 236, and methionine 277 together coordinate heme c.

In terms of assembly, component of the cbb3-type cytochrome c oxidase at least composed of CcoN, CcoO, CcoQ and CcoP. It depends on heme c as a cofactor.

It localises to the cell inner membrane. It functions in the pathway energy metabolism; oxidative phosphorylation. In terms of biological role, C-type cytochrome. Part of the cbb3-type cytochrome c oxidase complex. CcoP subunit is required for transferring electrons from donor cytochrome c via its heme groups to CcoO subunit. From there, electrons are shuttled to the catalytic binuclear center of CcoN subunit where oxygen reduction takes place. The complex also functions as a proton pump. The polypeptide is Cbb3-type cytochrome c oxidase subunit CcoP2 (Stutzerimonas stutzeri (Pseudomonas stutzeri)).